An 89-amino-acid polypeptide reads, in one-letter code: UPF0250 protein Bphyt_0500 (89 aa).

It belongs to the UPF0250 family.

The sequence is that of UPF0250 protein Bphyt_0500 from Paraburkholderia phytofirmans (strain DSM 17436 / LMG 22146 / PsJN) (Burkholderia phytofirmans).